The following is a 285-amino-acid chain: Bifunctional protein FolD (285 aa).

NADP(+) is bound by residues 165 to 167 (GRS) and Ser190.

It belongs to the tetrahydrofolate dehydrogenase/cyclohydrolase family. Homodimer.

The catalysed reaction is (6R)-5,10-methylene-5,6,7,8-tetrahydrofolate + NADP(+) = (6R)-5,10-methenyltetrahydrofolate + NADPH. It carries out the reaction (6R)-5,10-methenyltetrahydrofolate + H2O = (6R)-10-formyltetrahydrofolate + H(+). It participates in one-carbon metabolism; tetrahydrofolate interconversion. In terms of biological role, catalyzes the oxidation of 5,10-methylenetetrahydrofolate to 5,10-methenyltetrahydrofolate and then the hydrolysis of 5,10-methenyltetrahydrofolate to 10-formyltetrahydrofolate. In Staphylococcus saprophyticus subsp. saprophyticus (strain ATCC 15305 / DSM 20229 / NCIMB 8711 / NCTC 7292 / S-41), this protein is Bifunctional protein FolD.